Consider the following 376-residue polypeptide: Heme-dependent oxidative N-demethylase gamma subunit (376 aa).

The heme-dependent oxidative N-demethylase (HODM) is a heterotetramer composed of a catalytic alpha subunit, a FMN/2Fe-2S-dependent oxidoreductase beta subunit, a gamma subunit with putative aminotransferase activity, and a delta subunit of unknown function.

Functionally, component of the heme-dependent oxidative N-demethylase (HODM) enzyme, that catalyzes the NADPH-dependent oxidation of dimethylamine (DMA) to methylamine (MA) and formaldehyde. Functions in bacterial methylated amine catabolism, linking alkylamine oxidation to the tetrahydrofolate C1 pool. The gamma subunit of HODM may act as an aminomethyltransferase involved in the detoxification of formaldehyde released by the alpha subunit; this process requires tetrahydrofolate (THF). This is Heme-dependent oxidative N-demethylase gamma subunit from Ectopseudomonas mendocina (strain ymp) (Pseudomonas mendocina).